The sequence spans 189 residues: dTTP/UTP pyrophosphatase (189 aa).

The active-site Proton acceptor is the aspartate 70.

It belongs to the Maf family. YhdE subfamily. A divalent metal cation is required as a cofactor.

It is found in the cytoplasm. It carries out the reaction dTTP + H2O = dTMP + diphosphate + H(+). The enzyme catalyses UTP + H2O = UMP + diphosphate + H(+). Functionally, nucleoside triphosphate pyrophosphatase that hydrolyzes dTTP and UTP. May have a dual role in cell division arrest and in preventing the incorporation of modified nucleotides into cellular nucleic acids. This is dTTP/UTP pyrophosphatase from Akkermansia muciniphila (strain ATCC BAA-835 / DSM 22959 / JCM 33894 / BCRC 81048 / CCUG 64013 / CIP 107961 / Muc).